The sequence spans 76 residues: UPF0248 protein MmarC7_1289 (76 aa).

The protein belongs to the UPF0248 family.

The chain is UPF0248 protein MmarC7_1289 from Methanococcus maripaludis (strain C7 / ATCC BAA-1331).